Reading from the N-terminus, the 103-residue chain is Protein IQ-DOMAIN 20 (103 aa).

The segment at 10–22 is calmodulin-binding; that stretch reads VVRRKLLRRSQSR. IQ domains follow at residues 36–62 and 63–87; these read EEIAAVKIQAFFRGHLARRAFKALKSL and VKLQAVARGVLVRRQARIALHCMHA.

Belongs to the IQD family. As to quaternary structure, interacts with calmodulin (CaM and CML) at the plasma membrane in a calcium ion Ca(2+)- independent manner, however, Ca(2+) seems to modulate calmodulin binding. Binds to multiple calmodulin (CaM) in the presence of Ca(2+) and CaM-like proteins.

Its subcellular location is the nucleus. The protein localises to the nucleolus. It localises to the cell membrane. May be involved in cooperative interactions with calmodulins or calmodulin-like proteins. Recruits calmodulin proteins to microtubules, thus being a potential scaffold in cellular signaling and trafficking. May associate with nucleic acids and regulate gene expression at the transcriptional or post-transcriptional level. The sequence is that of Protein IQ-DOMAIN 20 from Arabidopsis thaliana (Mouse-ear cress).